The sequence spans 76 residues: DNA-directed RNA polymerase subunit Rpo5 (76 aa).

Belongs to the archaeal Rpo5/eukaryotic RPB5 RNA polymerase subunit family. As to quaternary structure, part of the RNA polymerase complex.

The protein resides in the cytoplasm. It carries out the reaction RNA(n) + a ribonucleoside 5'-triphosphate = RNA(n+1) + diphosphate. Its function is as follows. DNA-dependent RNA polymerase (RNAP) catalyzes the transcription of DNA into RNA using the four ribonucleoside triphosphates as substrates. The sequence is that of DNA-directed RNA polymerase subunit Rpo5 from Archaeoglobus fulgidus (strain ATCC 49558 / DSM 4304 / JCM 9628 / NBRC 100126 / VC-16).